The chain runs to 365 residues: Myb/SANT-like DNA-binding domain-containing protein 3 (365 aa).

A Myb-like domain is found at 13 to 78 (FSELEKSVLL…QLKKCWENIK (66 aa)). A coiled-coil region spans residues 301 to 337 (QLIQMNEVHVAKVQQIERECEMAEEEHRIKMEILNKK).

The protein belongs to the MSANTD3 family.

The chain is Myb/SANT-like DNA-binding domain-containing protein 3 (msantd3) from Xenopus tropicalis (Western clawed frog).